The primary structure comprises 103 residues: MGLIRKSHKQTQALAIKKIIKKCSSFGKNNDDSGLPNDVPKGHFVVYVGERRNRYIVPISCLDHPTFQDLLQRSEEEFGFNHDMGIIIPCQEVDFLSFFSMIA.

This sequence belongs to the ARG7 family.

In terms of biological role, effector of hormonal and environmental signals in plant growth. Involved in heliotropism. In Helianthus annuus (Common sunflower), this protein is Auxin-responsive protein SAUR50.